The primary structure comprises 59 residues: Large ribosomal subunit protein bL32 (59 aa).

This sequence belongs to the bacterial ribosomal protein bL32 family.

The protein is Large ribosomal subunit protein bL32 of Anaeromyxobacter dehalogenans (strain 2CP-C).